We begin with the raw amino-acid sequence, 218 residues long: Glycerol-3-phosphate acyltransferase (218 aa).

Transmembrane regions (helical) follow at residues 3–23 (FAIF…YWIA), 53–73 (GFPV…LSGI), 82–102 (FQLA…FLGF), 112–132 (LGVF…VFLV), 142–162 (IGSI…SILL), and 166–186 (EVSY…ILTH).

It belongs to the PlsY family. As to quaternary structure, probably interacts with PlsX.

The protein localises to the cell inner membrane. It carries out the reaction an acyl phosphate + sn-glycerol 3-phosphate = a 1-acyl-sn-glycero-3-phosphate + phosphate. Its pathway is lipid metabolism; phospholipid metabolism. Its function is as follows. Catalyzes the transfer of an acyl group from acyl-phosphate (acyl-PO(4)) to glycerol-3-phosphate (G3P) to form lysophosphatidic acid (LPA). This enzyme utilizes acyl-phosphate as fatty acyl donor, but not acyl-CoA or acyl-ACP. The polypeptide is Glycerol-3-phosphate acyltransferase (Leptospira borgpetersenii serovar Hardjo-bovis (strain JB197)).